A 685-amino-acid polypeptide reads, in one-letter code: Iron(3+)-hydroxamate import system permease protein FhuB (685 aa).

The next 18 membrane-spanning stretches (helical) occupy residues 35–55 (ALLLLALFVAACWLTWVNFSV), 87–107 (LAISLLVGAGLGLVGVLFQQV), 120–140 (VATGAQLGITVTTLWAIPGAL), 143–163 (QFAALTGACIVGALVFGVAWG), 172–192 (ILAGLVVSLYCGAINQLLVIF), 222–242 (QLLGGVMLTLLLLRPMTLMGL), 265–285 (AIVLSALLVNAVGIIGFIGLF), 302–322 (LMLAPLIGALILWLSDQIILW), 328–348 (MEVSTGSVTALIGAPLLLWLL), 373–393 (LAFAVAGGALLLLATWVALSF), 416–436 (WPRILAALMAGVMLAVAGCII), 456–476 (AAFGVVLMLFLVPGNAFGWLL), 479–499 (GSLGAAATLLIIMIAAGRGGF), 504–524 (MLLAGMALSTAFTMLLMMLQA), 553–573 (AIVMVILLAIVPLCRRWLTIL), 592–612 (IALLALAACLTATATMTIGPL), 632–652 (MPHMVISALAGGVLLVFADWC), and 660–680 (YQIPAGLLSSFIGAPYFIYLL).

Belongs to the binding-protein-dependent transport system permease family. FecCD subfamily. The complex is composed of two ATP-binding proteins (FhuC), a transmembrane protein (FhuB) and a solute-binding protein (FhuD).

The protein localises to the cell inner membrane. Its function is as follows. Part of the ABC transporter complex FhuCDB involved in iron(3+)-hydroxamate import. Responsible for the translocation of the substrate across the membrane. Involved in ferrioxamine-mediated iron(III) utilization. This Salmonella typhimurium (strain LT2 / SGSC1412 / ATCC 700720) protein is Iron(3+)-hydroxamate import system permease protein FhuB (fhuB).